The chain runs to 97 residues: UPF0298 protein MGAS9429_Spy0329 (97 aa).

It belongs to the UPF0298 family.

It localises to the cytoplasm. In Streptococcus pyogenes serotype M12 (strain MGAS9429), this protein is UPF0298 protein MGAS9429_Spy0329.